A 208-amino-acid chain; its full sequence is FMN-dependent NADH:quinone oxidoreductase (208 aa).

FMN is bound by residues 17 to 19, 99 to 102, and 143 to 146; these read SNS, MWNL, and SRGG.

It belongs to the azoreductase type 1 family. As to quaternary structure, homodimer. It depends on FMN as a cofactor.

The catalysed reaction is 2 a quinone + NADH + H(+) = 2 a 1,4-benzosemiquinone + NAD(+). It catalyses the reaction N,N-dimethyl-1,4-phenylenediamine + anthranilate + 2 NAD(+) = 2-(4-dimethylaminophenyl)diazenylbenzoate + 2 NADH + 2 H(+). In terms of biological role, quinone reductase that provides resistance to thiol-specific stress caused by electrophilic quinones. Also exhibits azoreductase activity. Catalyzes the reductive cleavage of the azo bond in aromatic azo compounds to the corresponding amines. This Staphylococcus haemolyticus (strain JCSC1435) protein is FMN-dependent NADH:quinone oxidoreductase.